The sequence spans 176 residues: Inorganic pyrophosphatase (176 aa).

Substrate is bound by residues K30, R44, and Y56. Positions 66, 71, and 103 each coordinate Mg(2+). Substrate is bound at residue Y142.

It belongs to the PPase family. In terms of assembly, homohexamer. Requires Mg(2+) as cofactor.

It is found in the cytoplasm. It catalyses the reaction diphosphate + H2O = 2 phosphate + H(+). Its function is as follows. Catalyzes the hydrolysis of inorganic pyrophosphate (PPi) forming two phosphate ions. The sequence is that of Inorganic pyrophosphatase from Escherichia coli O157:H7.